A 51-amino-acid chain; its full sequence is Perinerin (51 aa).

In terms of biological role, antibacterial activity against both Gram-negative and Gram-positive bacteria. Shows marked activity against P.aeruginosa, B.megaterium, A.viridans, moderate activity against E.coli K-12, S.aureus and M.luteus, and minor activity against P.vulgaris. Antifungal activity against P.heliothis. The polypeptide is Perinerin (Perinereis aibuhitensis (Korean lugworm)).